A 375-amino-acid chain; its full sequence is tRNA-specific 2-thiouridylase MnmA (375 aa).

Residues 12–19 and M38 each bind ATP; that span reads GMSGGVDS. The interaction with target base in tRNA stretch occupies residues 98 to 100; the sequence is NPD. C103 serves as the catalytic Nucleophile. Residues C103 and C200 are joined by a disulfide bond. Residue G127 participates in ATP binding. The interval 150 to 152 is interaction with tRNA; that stretch reads KDQ. C200 functions as the Cysteine persulfide intermediate in the catalytic mechanism. The segment at 312-313 is interaction with tRNA; sequence RY.

It belongs to the MnmA/TRMU family.

It is found in the cytoplasm. It catalyses the reaction S-sulfanyl-L-cysteinyl-[protein] + uridine(34) in tRNA + AH2 + ATP = 2-thiouridine(34) in tRNA + L-cysteinyl-[protein] + A + AMP + diphosphate + H(+). In terms of biological role, catalyzes the 2-thiolation of uridine at the wobble position (U34) of tRNA, leading to the formation of s(2)U34. The polypeptide is tRNA-specific 2-thiouridylase MnmA (Levilactobacillus brevis (strain ATCC 367 / BCRC 12310 / CIP 105137 / JCM 1170 / LMG 11437 / NCIMB 947 / NCTC 947) (Lactobacillus brevis)).